Reading from the N-terminus, the 477-residue chain is MAISPWKQFKLSVLNANQWFRKTPERALNMAYDAANKIRSIEEEHFEGRKISNVSISYSNSTKSYFNSQLNRYLKIIQVRLAEFNTSISVVGTLDQNKVDKQKDKFDQNYQQEFPGRSSIILDKLEFIDQVSSRYYKSSNHEAQELNTDLEIPHSSSSIAIVSSNVNVNNYPNNVRAGSSQNQNNLAELKSNIPNTNFLPRSLLKTFKKIKQELDPEAETEVIRKFRKSQIKTLTSVRFILLVILVPLLIHQLSKITFVGYLVDNFMSLPHQQAELFLNSNMEEEALVKLHQYEEKLHFKMYLGQAPELFPELYESGKEITEIPKSEREELIEHKVEKKAQEIALEYKAKGNNGIKNIFCDFISLITFVIIISTRKRELEVLKSFMDDVVYGLSDSAKAFIIILLTDMFVGFHSPHGWEVILENITRHFGLPESRDFNFLFIATFPVILDAVFKYWIFRYLNRSSPSAVATYKNMNE.

The next 3 helical transmembrane spans lie at 239–259, 354–374, and 437–457; these read FILL…ITFV, GIKN…IIST, and FNFL…KYWI.

It belongs to the CemA family.

It localises to the cell inner membrane. Its function is as follows. Required for H(+) efflux immediately after light irradiation to form a rapid H(+) concentration gradient across the thylakoid membranes. Together with PxcL, contributes to transient H(+) uptake following dark to light transition. This is Proton extrusion protein PxcA from Trichodesmium erythraeum (strain IMS101).